Reading from the N-terminus, the 210-residue chain is ATP-dependent Clp protease proteolytic subunit (210 aa).

Ser106 acts as the Nucleophile in catalysis. Residue His131 is part of the active site.

Belongs to the peptidase S14 family. As to quaternary structure, fourteen ClpP subunits assemble into 2 heptameric rings which stack back to back to give a disk-like structure with a central cavity, resembling the structure of eukaryotic proteasomes.

Its subcellular location is the cytoplasm. It carries out the reaction Hydrolysis of proteins to small peptides in the presence of ATP and magnesium. alpha-casein is the usual test substrate. In the absence of ATP, only oligopeptides shorter than five residues are hydrolyzed (such as succinyl-Leu-Tyr-|-NHMec, and Leu-Tyr-Leu-|-Tyr-Trp, in which cleavage of the -Tyr-|-Leu- and -Tyr-|-Trp bonds also occurs).. Functionally, cleaves peptides in various proteins in a process that requires ATP hydrolysis. Has a chymotrypsin-like activity. Plays a major role in the degradation of misfolded proteins. In Azospirillum brasilense, this protein is ATP-dependent Clp protease proteolytic subunit.